Reading from the N-terminus, the 796-residue chain is Protein translocase subunit SecA 2 (796 aa).

ATP-binding positions include Gln84, 102–106 (GEGKT), and Asp496.

This sequence belongs to the SecA family. Monomer and homodimer (Potential). Part of the accessory SecA2/SecY2 protein translocation apparatus required to export cell wall protein SraP.

It is found in the cell membrane. Its subcellular location is the cytoplasm. It catalyses the reaction ATP + H2O + cellular proteinSide 1 = ADP + phosphate + cellular proteinSide 2.. Functionally, part of the accessory SecA2/SecY2 system specifically required to export SraP, a serine-rich repeat cell wall protein encoded upstream in the same operon. This is Protein translocase subunit SecA 2 from Staphylococcus aureus (strain NCTC 8325 / PS 47).